A 499-amino-acid chain; its full sequence is Maturase K (499 aa).

Belongs to the intron maturase 2 family. MatK subfamily.

The protein resides in the plastid. It localises to the chloroplast. Functionally, usually encoded in the trnK tRNA gene intron. Probably assists in splicing its own and other chloroplast group II introns. The protein is Maturase K of Batis maritima (Maritime saltwort).